Consider the following 54-residue polypeptide: Ovomucoid (54 aa).

Residues 4–54 form the Kazal-like domain; the sequence is VDCSDYPKPACRMEYMPLCGSDNKTYGNKCNFCNAVVDSNGTLTLSHFGKC. Disulfide bonds link Cys-6/Cys-36, Cys-14/Cys-33, and Cys-22/Cys-54. A glycan (N-linked (GlcNAc...) asparagine) is linked at Asn-43.

It is found in the secreted. The polypeptide is Ovomucoid (Cereopsis novaehollandiae (Cape Barren goose)).